A 94-amino-acid polypeptide reads, in one-letter code: Small ribosomal subunit protein bS6 (94 aa).

Belongs to the bacterial ribosomal protein bS6 family.

Functionally, binds together with bS18 to 16S ribosomal RNA. The chain is Small ribosomal subunit protein bS6 from Clostridium botulinum (strain 657 / Type Ba4).